The following is a 311-amino-acid chain: Insulin-like growth factor-binding protein 2 (311 aa).

Positions 1–36 are cleaved as a signal peptide; the sequence is MALGGVGRGGAARAAWPRLLLAALAPALALAGPALP. The region spanning 38–120 is the IGFBP N-terminal domain; it reads VLFRCPPCTA…VQGQGTCARP (83 aa). 6 disulfide bridges follow: Cys42-Cys70, Cys45-Cys72, Cys53-Cys73, Cys61-Cys76, Cys84-Cys97, and Cys91-Cys117. Disordered regions lie at residues 112-168 and 188-210; these read QGQG…PLKT and GKVG…TGRT. Residues 209 to 291 form the Thyroglobulin type-1 domain; it reads RTPCQQELDQ…APTIRGDPEC (83 aa). 3 cysteine pairs are disulfide-bonded: Cys212-Cys246, Cys257-Cys268, and Cys270-Cys291. A Cell attachment site motif is present at residues 286–288; it reads RGD.

As to quaternary structure, binds IGF2 more than IGF1.

It is found in the secreted. In terms of biological role, inhibits IGF-mediated growth and developmental rates. IGF-binding proteins prolong the half-life of the IGFs and have been shown to either inhibit or stimulate the growth promoting effects of the IGFs on cell culture. They alter the interaction of IGFs with their cell surface receptors. This is Insulin-like growth factor-binding protein 2 (IGFBP2) from Gallus gallus (Chicken).